The chain runs to 202 residues: MARSFAQLARSAEKSSSSIAVPKEPLETAPLDIHTLGDDALRGDARRIGKVDERVRDLARDMLRSMYTASGIGLAAPQVGVHQQLLVIDLDFETPSTPPLVLINPEITTCSASVDTYEEGCLSIPGVYLDVVRPTAIQLSFRDEMGRPRTMKADGLMARCIQHEMDHLRGVLFVDRVTDAGGLKKELKDHGFLATDVRPITP.

Residues Cys-121 and His-163 each coordinate Fe cation. Residue Glu-164 is part of the active site. Residue His-167 coordinates Fe cation.

This sequence belongs to the polypeptide deformylase family. Fe(2+) serves as cofactor.

It carries out the reaction N-terminal N-formyl-L-methionyl-[peptide] + H2O = N-terminal L-methionyl-[peptide] + formate. Removes the formyl group from the N-terminal Met of newly synthesized proteins. Requires at least a dipeptide for an efficient rate of reaction. N-terminal L-methionine is a prerequisite for activity but the enzyme has broad specificity at other positions. In Synechococcus sp. (strain CC9311), this protein is Peptide deformylase.